The following is a 307-amino-acid chain: Inner spore coat protein H-like protein (307 aa).

Belongs to the CotH family.

The protein localises to the spore coat. Involved in the assembly of several proteins in the inner and outer layer of the spore coat. The protein is Inner spore coat protein H-like protein (yisJ) of Bacillus subtilis (strain 168).